Here is a 372-residue protein sequence, read N- to C-terminus: Protein L-Myc-1a (372 aa).

Disordered regions lie at residues 172-226 and 243-306; these read KVAA…ADPF and NYAA…DDLR. Positions 187–197 are enriched in acidic residues; it reads SDDDEDDDEID. A compositionally biased stretch (low complexity) spans 269 to 284; sequence ESSSAPSSPLSSPATS. One can recognise a bHLH domain in the interval 289–341; sequence STEQRRNFLERKRRDDLRSRFQALREEIPGLSGSSKTSKVAILTQATDYLLQL. Positions 290-306 are enriched in basic and acidic residues; sequence TEQRRNFLERKRRDDLR. Positions 341-369 are leucine-zipper; sequence LHSSQRRQAQEKRKLKAKQQQLLRRISAL.

As to quaternary structure, efficient DNA binding requires dimerization with another bHLH protein. Binds DNA as a heterodimer with max. In terms of tissue distribution, uterus.

It localises to the nucleus. The protein is Protein L-Myc-1a of Danio rerio (Zebrafish).